Consider the following 159-residue polypeptide: MNITIVSVGKLKEKYLKMGIDEYVKRLGGYAKIDLIEVADEKAPEQLSDAEMEIVKKKEGERILAKISTDTYVIALAINGKMKTSEQMAADLESLMTYGKSKIAFVIGGSLGLHEDVLKRADEQQSFGKMTLPHQLMKLVLVEQVYRSFRIMKGEPYHK.

Residues Leu-76, Gly-108, and 127 to 132 contribute to the S-adenosyl-L-methionine site; that span reads FGKMTL.

This sequence belongs to the RNA methyltransferase RlmH family. As to quaternary structure, homodimer.

It localises to the cytoplasm. It carries out the reaction pseudouridine(1915) in 23S rRNA + S-adenosyl-L-methionine = N(3)-methylpseudouridine(1915) in 23S rRNA + S-adenosyl-L-homocysteine + H(+). In terms of biological role, specifically methylates the pseudouridine at position 1915 (m3Psi1915) in 23S rRNA. The protein is Ribosomal RNA large subunit methyltransferase H of Lysinibacillus sphaericus (strain C3-41).